Reading from the N-terminus, the 133-residue chain is Snaclec purpureotin subunit alpha (133 aa).

Cystine bridges form between cysteine 2/cysteine 13, cysteine 30/cysteine 127, and cysteine 102/cysteine 119. The region spanning 9–128 (FKQYCYQIIK…CEQKHIFMCK (120 aa)) is the C-type lectin domain.

The protein belongs to the snaclec family. As to quaternary structure, homodimer (non-covalently linked) of heterodimer of alpha and beta subunits (disulfide-linked). As to expression, expressed by the venom gland.

Its subcellular location is the secreted. Snaclec that induces platelet aggregation without any cofactor in a dose-dependent manner. Its platelet aggregation effect is blocked by echicetin, suggesting it is a GPIb-binding protein which binds to the same or a closely related GPIb site on platelets as echicetin. The protein is Snaclec purpureotin subunit alpha of Trimeresurus purpureomaculatus (Mangrove pit viper).